The following is a 330-amino-acid chain: MHHQSVLHSGYFHPLLRAWQTTPSTVSATNLIYPIFVTDVPDDVQPIASLPGVARYGVNQLEEMLRPLVEAGLRCVLIFGVPSRVPKDEQGSAADSEDSPTIEAVRLLRKTFPTLLVACDVCLCPYTSHGHCGLLSENGAFLAEESRQRLAEVALAYAKAGCQVVAPSDMMDGRVEAIKAALLKHGLGNRVSVMSYSAKFASCFYGPFRDAAQSSPAFGDRRCYQLPPGARGLALRAVARDIQEGADILMVKPGLPYLDMVQEVKDKHPELPLAVYQVSGEFAMLWHGAKAGAFDLRTAVLESMTAFRRAGADIIITYFAPQLLKWLKEE.

Zn(2+) is bound by residues Cys122, Cys124, His131, and Cys132. Catalysis depends on Lys199, which acts as the Schiff-base intermediate with substrate. Position 199 is an N6-succinyllysine (Lys199). Residue Arg209 coordinates 5-aminolevulinate. Phosphoserine is present on Ser215. Arg221 contacts 5-aminolevulinate. Residue Cys223 participates in Zn(2+) binding. Catalysis depends on Lys252, which acts as the Schiff-base intermediate with substrate. Residue Lys252 is modified to N6-succinyllysine. Positions 279 and 318 each coordinate 5-aminolevulinate.

It belongs to the ALAD family. Homooctamer; active form. Homohexamer; low activity form. The cofactor is Zn(2+).

The protein resides in the cytoplasm. It is found in the cytosol. The enzyme catalyses 2 5-aminolevulinate = porphobilinogen + 2 H2O + H(+). Its pathway is porphyrin-containing compound metabolism; protoporphyrin-IX biosynthesis; coproporphyrinogen-III from 5-aminolevulinate: step 1/4. Its activity is regulated as follows. Can alternate between a fully active homooctamer and a low-activity homohexamer. A bound magnesium ion may promote the assembly of the fully active homooctamer. The magnesium-binding site is absent in the low-activity homohexamer. Inhibited by compounds that favor the hexameric state. Inhibited by divalent lead ions. The lead ions partially displace the zinc cofactor. Catalyzes an early step in the biosynthesis of tetrapyrroles. Binds two molecules of 5-aminolevulinate per subunit, each at a distinct site, and catalyzes their condensation to form porphobilinogen. This Rattus norvegicus (Rat) protein is Delta-aminolevulinic acid dehydratase (Alad).